Reading from the N-terminus, the 57-residue chain is Large ribosomal subunit protein uL30 (57 aa).

Belongs to the universal ribosomal protein uL30 family. Part of the 50S ribosomal subunit.

The polypeptide is Large ribosomal subunit protein uL30 (Maridesulfovibrio salexigens (strain ATCC 14822 / DSM 2638 / NCIMB 8403 / VKM B-1763) (Desulfovibrio salexigens)).